Here is a 302-residue protein sequence, read N- to C-terminus: Aspartate carbamoyltransferase catalytic subunit (302 aa).

Residues R53 and T54 each coordinate carbamoyl phosphate. K82 contributes to the L-aspartate binding site. 3 residues coordinate carbamoyl phosphate: R103, H131, and Q134. L-aspartate-binding residues include R164 and R223. The carbamoyl phosphate site is built by L260 and P261.

The protein belongs to the aspartate/ornithine carbamoyltransferase superfamily. ATCase family. Heterooligomer of catalytic and regulatory chains.

The enzyme catalyses carbamoyl phosphate + L-aspartate = N-carbamoyl-L-aspartate + phosphate + H(+). It functions in the pathway pyrimidine metabolism; UMP biosynthesis via de novo pathway; (S)-dihydroorotate from bicarbonate: step 2/3. Its function is as follows. Catalyzes the condensation of carbamoyl phosphate and aspartate to form carbamoyl aspartate and inorganic phosphate, the committed step in the de novo pyrimidine nucleotide biosynthesis pathway. This is Aspartate carbamoyltransferase catalytic subunit from Methanococcus vannielii (strain ATCC 35089 / DSM 1224 / JCM 13029 / OCM 148 / SB).